Reading from the N-terminus, the 280-residue chain is Large ribosomal subunit protein uL2 (280 aa).

2 disordered regions span residues 27 to 58 and 226 to 280; these read STPEKSLVRPLHGHGGRNAHGRITTRHKGGGH and MNPV…KHGR. 2 stretches are compositionally biased toward basic residues: residues 37 to 58 and 268 to 280; these read LHGHGGRNAHGRITTRHKGGGH and IVRRRRTGKKHGR.

This sequence belongs to the universal ribosomal protein uL2 family. Part of the 50S ribosomal subunit. Forms a bridge to the 30S subunit in the 70S ribosome.

Functionally, one of the primary rRNA binding proteins. Required for association of the 30S and 50S subunits to form the 70S ribosome, for tRNA binding and peptide bond formation. It has been suggested to have peptidyltransferase activity; this is somewhat controversial. Makes several contacts with the 16S rRNA in the 70S ribosome. The sequence is that of Large ribosomal subunit protein uL2 from Mycobacterium marinum (strain ATCC BAA-535 / M).